The chain runs to 272 residues: HTH-type transcriptional repressor AllR (272 aa).

A disordered region spans residues 1-20; the sequence is MTEVRRRGRPGQQEPSAQKG. Residues 21-83 enclose the HTH iclR-type domain; the sequence is AQALERGIAI…SQLGWWHIGL (63 aa). A DNA-binding region (H-T-H motif) is located at residues 43–62; that stretch reads VSDISLNLDLPLSTTFRLLK. In terms of domain architecture, IclR-ED spans 98 to 267; sequence VLSVGGPFMR…ARNISTALGL (170 aa). Residues 154–156, Asp207, Cys217, and 234–236 each bind glyoxylate; these read SGA and SIS.

Negative regulator of allantoin and glyoxylate utilization operons. Binds to the gcl promoter and to the allS-allA intergenic region. The polypeptide is HTH-type transcriptional repressor AllR (allR) (Klebsiella pneumoniae).